The chain runs to 267 residues: Integral membrane protein 2C (267 aa).

Thr-37 carries the phosphothreonine modification. A helical; Signal-anchor for type II membrane protein membrane pass occupies residues 55-75 (VGGVCYLSMGMVVLLMGLVFA). One can recognise a BRICHOS domain in the interval 136 to 230 (FGGGDPADII…LCNGKDTYRL (95 aa)). A disulfide bond links Cys-163 and Cys-222. Asn-169 carries an N-linked (GlcNAc...) asparagine glycan.

Belongs to the ITM2 family. Interacts with BACE1. Interacts with APP. Interacts with STMN2. In terms of processing, type I membrane-bound, as well as soluble, furin has a pre-eminent role in ITM2C proteolytic processing. PCSK7 and PCSK5 may also be involved although to a lesser extent. The soluble form of PCSK7 is incapable of processing ITM2C. Fails to undergo shedding by ADAM10 and intramembrane cleavage by SPPL2B. In terms of tissue distribution, high levels in the brain, specifically in the cerebral cortex, medulla, amygdala, hippocampus, thalamus, caudate nucleus, cerebellum, olfactory lobe and spinal cord. Very low levels in other organs.

It is found in the lysosome membrane. It localises to the cell membrane. Negative regulator of amyloid-beta peptide production. May inhibit the processing of APP by blocking its access to alpha- and beta-secretase. Binding to the beta-secretase-cleaved APP C-terminal fragment is negligible, suggesting that ITM2C is a poor gamma-secretase cleavage inhibitor. May play a role in TNF-induced cell death and neuronal differentiation. The polypeptide is Integral membrane protein 2C (ITM2C) (Homo sapiens (Human)).